A 121-amino-acid chain; its full sequence is Large ribosomal subunit protein uL14c (121 aa).

Belongs to the universal ribosomal protein uL14 family. As to quaternary structure, part of the 50S ribosomal subunit.

It is found in the plastid. It localises to the chloroplast. Binds to 23S rRNA. This chain is Large ribosomal subunit protein uL14c, found in Guillardia theta (Cryptophyte).